Consider the following 887-residue polypeptide: Kinesin-like protein KIF20A (887 aa).

S2 carries the post-translational modification N-acetylserine. S7, S14, and S21 each carry phosphoserine. The 444-residue stretch at 63–506 (KVKVYLRIRP…AKFSALASQL (444 aa)) folds into the Kinesin motor domain. Position 159 to 166 (159 to 166 (GVTNSGKT)) interacts with ATP. The residue at position 527 (S527) is a Phosphoserine; by PLK1. Residues 527–553 (SPQVGPGLEKEDKADSDLEDSPEDEAD) form a disordered region. Positions 543–553 (DLEDSPEDEAD) are enriched in acidic residues. A coiled-coil region spans residues 559-804 (KEELLQVVEA…VLVKLDLQKK (246 aa)). Phosphoserine occurs at positions 683 and 823. The interval 805-887 (AACIAEQYHT…LLKSPFGKKY (83 aa)) is globular. Residues 826-875 (KRLGANQENQQPNHQPPGKKPFLRNLLPRTPTCQSSTDSSPYARILRSRH) form a disordered region. A Phosphothreonine modification is found at T855. A compositionally biased stretch (polar residues) spans 856–865 (PTCQSSTDSS). 3 positions are modified to phosphoserine: S865, S876, and S881.

Belongs to the TRAFAC class myosin-kinesin ATPase superfamily. Kinesin family. Phosphorylated by PLK1 at Ser-527 during mitosis, creating a docking site for PLK1 and recruiting PLK1 at central spindle. In terms of tissue distribution, ubiquitously expressed, with highest levels in spleen and testis.

The protein resides in the golgi apparatus. It localises to the cytoplasm. The protein localises to the cytoskeleton. Its subcellular location is the spindle. Mitotic kinesin required for chromosome passenger complex (CPC)-mediated cytokinesis. Following phosphorylation by PLK1, involved in recruitment of PLK1 to the central spindle. Interacts with guanosine triphosphate (GTP)-bound forms of RAB6A and RAB6B. May act as a motor required for the retrograde RAB6 regulated transport of Golgi membranes and associated vesicles along microtubules. Has a microtubule plus end-directed motility. The protein is Kinesin-like protein KIF20A (Kif20a) of Mus musculus (Mouse).